We begin with the raw amino-acid sequence, 475 residues long: GDP-fucose protein O-fucosyltransferase 3 (475 aa).

Over 1 to 8 the chain is Cytoplasmic; that stretch reads MVRMRRKR. A helical; Signal-anchor for type II membrane protein membrane pass occupies residues 9–29; sequence LWASCICFAAFFFLLVTLQVI. At 30–475 the chain is on the lumenal side; the sequence is TELGNSENKA…QEFWMLVFKQ (446 aa). N-linked (GlcNAc...) asparagine glycans are attached at residues asparagine 107, asparagine 165, and asparagine 315. A disulfide bridge links cysteine 386 with cysteine 389. A glycan (N-linked (GlcNAc...) asparagine) is linked at asparagine 462.

This sequence belongs to the glycosyltransferase 10 family.

The protein localises to the endoplasmic reticulum membrane. It carries out the reaction L-threonyl-[protein] + GDP-beta-L-fucose = 3-O-(alpha-L-fucosyl)-L-threonyl-[protein] + GDP + H(+). The enzyme catalyses L-seryl-[protein] + GDP-beta-L-fucose = 3-O-(alpha-L-fucosyl)-L-seryl-[protein] + GDP + H(+). It participates in protein modification; protein glycosylation. Protein O-fucosyltransferase that specifically catalyzes O-fucosylation of serine or threonine residues in EMI domains of target proteins. Attaches fucose through an O-glycosidic linkage. O-fucosylation of EMI domain-containing proteins may be required for facilitating protein folding and secretion. This Gallus gallus (Chicken) protein is GDP-fucose protein O-fucosyltransferase 3 (FUT10).